A 601-amino-acid chain; its full sequence is Nuclear receptor subfamily 2 group C member 1 (601 aa).

The interval 1 to 179 (MATIEEIAHQ…RLQRCIAFGM (179 aa)) is required for interaction with KAT2B. Positions 111 to 186 (FDLCVVCGDK…FGMKQDSVQC (76 aa)) form a DNA-binding region, nuclear receptor. NR C4-type zinc fingers lie at residues 114-134 (CVVC…CEGC) and 150-169 (CRGS…CQYC). Phosphoserine is present on residues Ser198 and Ser216. Thr221 carries the post-translational modification Phosphothreonine. Thr223 is modified (phosphothreonine; by MAPK1). Lys251 participates in a covalent cross-link: Glycyl lysine isopeptide (Lys-Gly) (interchain with G-Cter in SUMO); alternate. A Glycyl lysine isopeptide (Lys-Gly) (interchain with G-Cter in SUMO2); alternate cross-link involves residue Lys251. In terms of domain architecture, NR LBD spans 349-591 (GSVHLITGDS…SVIPHILKME (243 aa)). Ser582 carries the phosphoserine; by PKC modification. Residues 585-601 (PHILKMEPGQYSKTSSL) are required for interaction with NRIP1. Residue Lys589 forms a Glycyl lysine isopeptide (Lys-Gly) (interchain with G-Cter in SUMO2) linkage.

Belongs to the nuclear hormone receptor family. NR2 subfamily. Homodimer. Heterodimer; with NR2C2 which is required for chromatin remodeling and for binding to promoter regions such as globin DR1 repeats. Interacts with ESR1; the interaction prevents homodimerization of ESR1 and suppresses its transcriptional activity and cell growth. Interacts with NRIP1 (via its LXXLL motifs); the interaction provides corepressor activity. Interacts with HDAC3 (via the DNA-binding domain); the interaction recruits phosphorylated NR2C1 to PML bodies for sumoylation. Interacts with HDAC4 (via the DNA-binding domain). Interacts with PIAS1; the interaction is required for sumoylation of NR2C1. Interacts with UBE2I; the interaction is required for sumoylation of NR2C1. Interacts with KAT2B; the interaction acts as a corepressor of gene expression. Post-translationally, sumoylation requires both PIAS1 and UBE2I. Sumoylation appears to dissociate NR2C1 from the PML nuclear bodies. Enhances the interaction with NRIP1 but inhibits interaction with KAT2B. In proliferating cells, stimulation by all-trans retinoic acid, activation of MAPK1-mediated phosphorylation and recruitment to PML bodies with subsequent sumoylation, suppresses OCT4 expression. In terms of processing, phosphorylated on several serine and threonine residues. Phosphorylation on Thr-223, stimulated by all-trans retinoic acid (atRA) mediates PML location and sumoylation in proliferating cells which then modulates its association with effector molecules, KAT2B and NRIP1. Phosphorylation on Ser-582 by PKC is important for protein stability and function as activator of RARB.

It is found in the nucleus. The protein localises to the PML body. Its function is as follows. Orphan nuclear receptor. Binds the IR7 element in the promoter of its own gene in an autoregulatory negative feedback mechanism. Primarily repressor of a broad range of genes including ESR1 and RARB. Together with NR2C2, forms the core of the DRED (direct repeat erythroid-definitive) complex that represses embryonic and fetal globin transcription. Binds to hormone response elements (HREs) consisting of two 5'-AGGTCA-3' half site direct repeat consensus sequences. Also activator of OCT4 gene expression. Plays a fundamental role in early embryogenesis and regulates embryonic stem cell proliferation and differentiation. Mediator of retinoic acid-regulated preadipocyte proliferation. The polypeptide is Nuclear receptor subfamily 2 group C member 1 (NR2C1) (Pongo abelii (Sumatran orangutan)).